The primary structure comprises 142 residues: Sorting nexin-3 (142 aa).

In terms of domain architecture, PX spans 21–138 (NFLEIEVRNP…ASFIQDPNWD (118 aa)). 5 residues coordinate a 1,2-diacyl-sn-glycero-3-phospho-(1D-myo-inositol-3-phosphate): R64, S66, K90, R95, and R104.

This sequence belongs to the sorting nexin family.

The protein resides in the cytoplasm. Its subcellular location is the golgi apparatus membrane. It is found in the prevacuolar compartment membrane. Required for retention of late Golgi membrane proteins. Component of the retrieval machinery that functions by direct interaction with the cytosolic tails of certain TGN membrane proteins during the sorting/budding process at the prevacuolar compartment. Binds phosphatidylinositol 3-phosphate (PtdIns(P3)). The sequence is that of Sorting nexin-3 (snx3) from Aspergillus fumigatus (strain ATCC MYA-4609 / CBS 101355 / FGSC A1100 / Af293) (Neosartorya fumigata).